The primary structure comprises 223 residues: Superoxide dismutase [Mn], mitochondrial (223 aa).

The transit peptide at methionine 1–leucine 24 directs the protein to the mitochondrion. Residues histidine 50, histidine 98, aspartate 184, and histidine 188 each contribute to the Mn(2+) site.

This sequence belongs to the iron/manganese superoxide dismutase family. In terms of assembly, homotetramer. The cofactor is Mn(2+).

It localises to the mitochondrion matrix. The enzyme catalyses 2 superoxide + 2 H(+) = H2O2 + O2. Its function is as follows. Destroys superoxide anion radicals which are normally produced within the cells and which are toxic to biological systems. The chain is Superoxide dismutase [Mn], mitochondrial (sod-2) from Onchocerca volvulus.